The primary structure comprises 523 residues: Chitinase Chi52 (523 aa).

A signal peptide spans 1-30; it reads MNQAVRFRPVITFALAFLLLITWFAPRADA. Residues 80 to 101 form a disordered region; the sequence is GSGGETPTPDTAPPSVPAGLTS. Residues 95–180 enclose the Fibronectin type-III domain; sequence VPAGLTSSSI…TSLSVTTSNG (86 aa). The GH18 domain maps to 190–513; the sequence is KWLIGYWHNF…SAHRPFLNGL (324 aa). Glutamate 302 (proton donor) is an active-site residue.

Belongs to the glycosyl hydrolase 18 family. Chitinase class II subfamily.

It catalyses the reaction Random endo-hydrolysis of N-acetyl-beta-D-glucosaminide (1-&gt;4)-beta-linkages in chitin and chitodextrins.. Its activity is regulated as follows. Activity is inhibited by Cu(2+) and Co(2+), and almost completely inhibited by SDS. In terms of biological role, acidic chitinase that displays a broad substrate specificity, showing the highest specific activity toward colloidal chitin, followed by ethylene glycol chitin and ball milled chitin, but exhibits no activity toward powdery chitin and chitosan. Hydrolyzes colloidal chitin and chitooligosaccharides with degree of polymerization 2-5 to release mainly N-acetyl chitobiose. Displays inhibition effects on the growth of some phytopathogenic fungi, including Alternaria alstroemeriae, Botrytis cinerea, Rhizoctonia solani, Sclerotinia sclerotiorum and Valsa mali. This is Chitinase Chi52 from Paenibacillus xylanexedens.